A 251-amino-acid chain; its full sequence is Flagellar L-ring protein (251 aa).

An N-terminal signal peptide occupies residues 1 to 17; that stretch reads MIRKLAALIVAAAALQA. Cysteine 18 carries the N-palmitoyl cysteine lipid modification. The S-diacylglycerol cysteine moiety is linked to residue cysteine 18.

It belongs to the FlgH family. The basal body constitutes a major portion of the flagellar organelle and consists of four rings (L,P,S, and M) mounted on a central rod.

It localises to the cell outer membrane. The protein resides in the bacterial flagellum basal body. Functionally, assembles around the rod to form the L-ring and probably protects the motor/basal body from shearing forces during rotation. This Maricaulis maris (strain MCS10) (Caulobacter maris) protein is Flagellar L-ring protein.